Here is a 392-residue protein sequence, read N- to C-terminus: Carbamoyl phosphate synthase small chain (392 aa).

The interval 1–174 (MSKKALLALE…EVIVENPEGD (174 aa)) is CPSase. Residues S47, G224, and G226 each contribute to the L-glutamine site. Positions 176–392 (SVVVLDSGVK…EFKRLIKEVR (217 aa)) constitute a Glutamine amidotransferase type-1 domain. Residue C252 is the Nucleophile of the active site. L253, Q256, N294, G296, and F297 together coordinate L-glutamine. Active-site residues include H367 and E369.

This sequence belongs to the CarA family. In terms of assembly, composed of two chains; the small (or glutamine) chain promotes the hydrolysis of glutamine to ammonia, which is used by the large (or ammonia) chain to synthesize carbamoyl phosphate. Tetramer of heterodimers (alpha,beta)4.

The enzyme catalyses hydrogencarbonate + L-glutamine + 2 ATP + H2O = carbamoyl phosphate + L-glutamate + 2 ADP + phosphate + 2 H(+). The catalysed reaction is L-glutamine + H2O = L-glutamate + NH4(+). Its pathway is amino-acid biosynthesis; L-arginine biosynthesis; carbamoyl phosphate from bicarbonate: step 1/1. The protein operates within pyrimidine metabolism; UMP biosynthesis via de novo pathway; (S)-dihydroorotate from bicarbonate: step 1/3. Its function is as follows. Small subunit of the glutamine-dependent carbamoyl phosphate synthetase (CPSase). CPSase catalyzes the formation of carbamoyl phosphate from the ammonia moiety of glutamine, carbonate, and phosphate donated by ATP, constituting the first step of 2 biosynthetic pathways, one leading to arginine and/or urea and the other to pyrimidine nucleotides. The small subunit (glutamine amidotransferase) binds and cleaves glutamine to supply the large subunit with the substrate ammonia. The chain is Carbamoyl phosphate synthase small chain from Thermotoga maritima (strain ATCC 43589 / DSM 3109 / JCM 10099 / NBRC 100826 / MSB8).